A 139-amino-acid polypeptide reads, in one-letter code: D-ribose pyranase (139 aa).

The active-site Proton donor is the His20. Substrate contacts are provided by residues Asp28, His106, and 128–130 (YAN).

This sequence belongs to the RbsD / FucU family. RbsD subfamily. As to quaternary structure, homodecamer.

It is found in the cytoplasm. The enzyme catalyses beta-D-ribopyranose = beta-D-ribofuranose. Its pathway is carbohydrate metabolism; D-ribose degradation; D-ribose 5-phosphate from beta-D-ribopyranose: step 1/2. In terms of biological role, catalyzes the interconversion of beta-pyran and beta-furan forms of D-ribose. The protein is D-ribose pyranase of Aeromonas salmonicida (strain A449).